Reading from the N-terminus, the 106-residue chain is Putative membrane protein insertion efficiency factor (106 aa).

It belongs to the UPF0161 family.

The protein resides in the cell inner membrane. Functionally, could be involved in insertion of integral membrane proteins into the membrane. The chain is Putative membrane protein insertion efficiency factor from Acinetobacter baumannii (strain AB307-0294).